Consider the following 397-residue polypeptide: LL-diaminopimelate aminotransferase (397 aa).

Residues Tyr-14 and Gly-41 each contribute to the substrate site. Residues Tyr-71, 104–105 (AK), Tyr-128, Asn-174, Tyr-205, and 233–235 (SFS) each bind pyridoxal 5'-phosphate. Substrate contacts are provided by Lys-105, Tyr-128, and Asn-174. At Lys-236 the chain carries N6-(pyridoxal phosphate)lysine. Residues Arg-244 and Asn-275 each contribute to the pyridoxal 5'-phosphate site. Positions 275 and 368 each coordinate substrate.

It belongs to the class-I pyridoxal-phosphate-dependent aminotransferase family. LL-diaminopimelate aminotransferase subfamily. As to quaternary structure, homodimer. Pyridoxal 5'-phosphate is required as a cofactor.

It carries out the reaction (2S,6S)-2,6-diaminopimelate + 2-oxoglutarate = (S)-2,3,4,5-tetrahydrodipicolinate + L-glutamate + H2O + H(+). The protein operates within amino-acid biosynthesis; L-lysine biosynthesis via DAP pathway; LL-2,6-diaminopimelate from (S)-tetrahydrodipicolinate (aminotransferase route): step 1/1. Its function is as follows. Involved in the synthesis of meso-diaminopimelate (m-DAP or DL-DAP), required for both lysine and peptidoglycan biosynthesis. Catalyzes the direct conversion of tetrahydrodipicolinate to LL-diaminopimelate. This chain is LL-diaminopimelate aminotransferase, found in Chlamydia pneumoniae (Chlamydophila pneumoniae).